The primary structure comprises 165 residues: Neuropeptide W (165 aa).

Residues 1–32 (MAWRPGERGAPASRPRLALLLLLLLLPLPSGA) form the signal peptide. Residues 65-165 (ALRAAAGPLA…GLPCLAPGPF (101 aa)) constitute a propeptide that is removed on maturation. A disordered region spans residues 106–165 (SQAGIPVRAPRSPRAPEPALEPESLDFSGAGQRLRRDVSRPAVDPAANRLGLPCLAPGPF). A compositionally biased stretch (low complexity) spans 113–127 (RAPRSPRAPEPALEP). O-linked (Xyl...) (chondroitin sulfate) serine glycosylation is present at Ser133.

It belongs to the neuropeptide B/W family. Detected in cerebrospinal fluid and urine (at protein level). Detected at high levels in the substantia nigra, fetal kidney and trachea; at lower levels in testis, uterus, ovary and placenta. Not detectable in many regions of the central nervous system. Also detected at high levels in lymphoblastic leukemia and colorectal adenocarcinoma.

It is found in the secreted. Plays a regulatory role in the organization of neuroendocrine signals accessing the anterior pituitary gland. Stimulates water drinking and food intake. May play a role in the hypothalamic response to stress. NPW23 activates GPR7 and GPR8 more efficiently than NPW30. The sequence is that of Neuropeptide W (NPW) from Homo sapiens (Human).